We begin with the raw amino-acid sequence, 284 residues long: uncharacterized protein (284 aa).

This sequence belongs to the AtsA family.

This is an uncharacterized protein from Mycobacterium leprae (strain TN).